We begin with the raw amino-acid sequence, 395 residues long: Phosphopentomutase (395 aa).

The Mn(2+) site is built by Asp12, Asp289, His294, Asp330, His331, and His342.

This sequence belongs to the phosphopentomutase family. It depends on Mn(2+) as a cofactor.

The protein localises to the cytoplasm. The enzyme catalyses 2-deoxy-alpha-D-ribose 1-phosphate = 2-deoxy-D-ribose 5-phosphate. The catalysed reaction is alpha-D-ribose 1-phosphate = D-ribose 5-phosphate. It participates in carbohydrate degradation; 2-deoxy-D-ribose 1-phosphate degradation; D-glyceraldehyde 3-phosphate and acetaldehyde from 2-deoxy-alpha-D-ribose 1-phosphate: step 1/2. Its function is as follows. Isomerase that catalyzes the conversion of deoxy-ribose 1-phosphate (dRib-1-P) and ribose 1-phosphate (Rib-1-P) to deoxy-ribose 5-phosphate (dRib-5-P) and ribose 5-phosphate (Rib-5-P), respectively. The chain is Phosphopentomutase from Levilactobacillus brevis (strain ATCC 367 / BCRC 12310 / CIP 105137 / JCM 1170 / LMG 11437 / NCIMB 947 / NCTC 947) (Lactobacillus brevis).